A 140-amino-acid polypeptide reads, in one-letter code: Large ribosomal subunit protein bL17 (140 aa).

A compositionally biased stretch (basic and acidic residues) spans 119-133 (DPSAKGAADRARLEE). Residues 119–140 (DPSAKGAADRARLEEEGGMTEE) form a disordered region.

Belongs to the bacterial ribosomal protein bL17 family. As to quaternary structure, part of the 50S ribosomal subunit. Contacts protein L32.

This is Large ribosomal subunit protein bL17 from Maricaulis maris (strain MCS10) (Caulobacter maris).